The chain runs to 241 residues: Pyridoxine/pyridoxamine 5'-phosphate oxidase (241 aa).

Residues 1-35 form a disordered region; sequence MASNPPSAASPRRTAVSPGADRPDGPDPAGQRQSY. Substrate contacts are provided by residues 32 to 35 and Lys92; that span reads RQSY. Residues 87 to 92, 102 to 103, Arg108, Lys109, and Gln131 contribute to the FMN site; these read RTVLLK and YT. Residues Tyr149, Arg153, and Ser157 each contribute to the substrate site. FMN is bound by residues 166-167 and Trp212; that span reads QS. 218–220 is a substrate binding site; sequence RLH. Residue Arg222 coordinates FMN.

The protein belongs to the pyridoxamine 5'-phosphate oxidase family. Homodimer. The cofactor is FMN.

The enzyme catalyses pyridoxamine 5'-phosphate + O2 + H2O = pyridoxal 5'-phosphate + H2O2 + NH4(+). The catalysed reaction is pyridoxine 5'-phosphate + O2 = pyridoxal 5'-phosphate + H2O2. It participates in cofactor metabolism; pyridoxal 5'-phosphate salvage; pyridoxal 5'-phosphate from pyridoxamine 5'-phosphate: step 1/1. The protein operates within cofactor metabolism; pyridoxal 5'-phosphate salvage; pyridoxal 5'-phosphate from pyridoxine 5'-phosphate: step 1/1. Its function is as follows. Catalyzes the oxidation of either pyridoxine 5'-phosphate (PNP) or pyridoxamine 5'-phosphate (PMP) into pyridoxal 5'-phosphate (PLP). The chain is Pyridoxine/pyridoxamine 5'-phosphate oxidase from Frankia alni (strain DSM 45986 / CECT 9034 / ACN14a).